Consider the following 140-residue polypeptide: Protein SamA (140 aa).

Catalysis depends on for autocatalytic cleavage activity residues serine 61 and lysine 98.

It belongs to the peptidase S24 family.

In terms of biological role, involved in UV protection and mutation. This chain is Protein SamA (samA), found in Salmonella typhimurium (strain LT2 / SGSC1412 / ATCC 700720).